A 221-amino-acid polypeptide reads, in one-letter code: Endo-1,4-beta-xylanase A (221 aa).

The N-terminal stretch at Met-1–Ala-16 is a signal peptide. A GH11 domain is found at Pro-29–Ser-221. Residue Glu-114 is the Nucleophile of the active site. Glu-208 acts as the Proton donor in catalysis.

The protein belongs to the glycosyl hydrolase 11 (cellulase G) family.

The protein resides in the secreted. It catalyses the reaction Endohydrolysis of (1-&gt;4)-beta-D-xylosidic linkages in xylans.. Its pathway is glycan degradation; xylan degradation. Its function is as follows. Endo-1,4-beta-xylanase involved in the hydrolysis of xylan, a major structural heterogeneous polysaccharide found in plant biomass representing the second most abundant polysaccharide in the biosphere, after cellulose. The polypeptide is Endo-1,4-beta-xylanase A (xynA) (Aureobasidium pullulans (Black yeast)).